The sequence spans 628 residues: Kelch-like protein 14 (628 aa).

One can recognise a BTB domain in the interval 33 to 151 (CDVTLTAQGQ…LYTANVTLSL (119 aa)). Residues 69 to 115 (GGGVGGQDGLGAPKDQQQPPQQQPSQQQQPPPQEEPGTPSSSPDDKL) are disordered. The segment covering 84 to 96 (QQQPPQQQPSQQQ) has biased composition (low complexity). The BACK domain maps to 210–279 (VEDVLLLNFE…PAPELVERVQ (70 aa)). Kelch repeat units follow at residues 323–372 (MLLL…EVEN), 373–424 (FLFV…RLDK), 425–471 (HLYV…VHNG), 473–518 (IYIS…VMND), 520–570 (LYAI…VLDD), and 572–620 (IYLV…TVIL).

As to quaternary structure, interacts with TOR1A, preferentially with the ATP-free form.

The protein resides in the cytoplasm. It localises to the cytosol. The protein localises to the endoplasmic reticulum membrane. This Homo sapiens (Human) protein is Kelch-like protein 14 (KLHL14).